The following is a 259-amino-acid chain: Phosphonates import ATP-binding protein PhnC (259 aa).

The 242-residue stretch at 4–245 (ISIQSVTKRF…ALRTIYQREG (242 aa)) folds into the ABC transporter domain. 37–44 (GPSGAGKS) contacts ATP.

It belongs to the ABC transporter superfamily. Phosphonates importer (TC 3.A.1.9.1) family. In terms of assembly, the complex is composed of two ATP-binding proteins (PhnC), two transmembrane proteins (PhnE) and a solute-binding protein (PhnD).

The protein localises to the cell inner membrane. It carries out the reaction phosphonate(out) + ATP + H2O = phosphonate(in) + ADP + phosphate + H(+). Its function is as follows. Part of the ABC transporter complex PhnCDE involved in phosphonates import. Responsible for energy coupling to the transport system. This Thiobacillus denitrificans (strain ATCC 25259 / T1) protein is Phosphonates import ATP-binding protein PhnC.